The sequence spans 347 residues: NADH-ubiquinone oxidoreductase chain 2 (347 aa).

A run of 10 helical transmembrane segments spans residues 1 to 21, 26 to 46, 56 to 76, 96 to 116, 153 to 171, 178 to 198, 199 to 219, 237 to 257, 277 to 297, and 326 to 346; these read MTPM…TLTL, WLLM…LLTY, AIKY…AASL, GIMT…YWVP, ILLT…NGLN, VMAY…IYFP, TLTT…FTVF, APIM…LPPL, IMAT…MRII, and LPTL…FITL.

The protein belongs to the complex I subunit 2 family. As to quaternary structure, core subunit of respiratory chain NADH dehydrogenase (Complex I) which is composed of 45 different subunits. Interacts with TMEM242.

The protein resides in the mitochondrion inner membrane. The catalysed reaction is a ubiquinone + NADH + 5 H(+)(in) = a ubiquinol + NAD(+) + 4 H(+)(out). Core subunit of the mitochondrial membrane respiratory chain NADH dehydrogenase (Complex I) which catalyzes electron transfer from NADH through the respiratory chain, using ubiquinone as an electron acceptor. Essential for the catalytic activity and assembly of complex I. In Ornithorhynchus anatinus (Duckbill platypus), this protein is NADH-ubiquinone oxidoreductase chain 2.